Reading from the N-terminus, the 506-residue chain is Secreted RxLR effector protein 134 (506 aa).

An N-terminal signal peptide occupies residues Met-1–Ala-19. Residues Arg-50–Arg-71 carry the RxLR-dEER motif.

It belongs to the RxLR effector family.

The protein localises to the secreted. Its subcellular location is the host nucleus. Its function is as follows. Secreted effector that completely suppresses the host cell death induced by cell death-inducing proteins. This chain is Secreted RxLR effector protein 134, found in Plasmopara viticola (Downy mildew of grapevine).